Here is a 487-residue protein sequence, read N- to C-terminus: NADH-quinone oxidoreductase subunit N (487 aa).

Helical transmembrane passes span 18–38 (LVPELVLIGGAFALLMLDLFV), 44–64 (VWTHLFSVAVLAVVLVLLATG), 84–104 (VMKTVIVLVSGLSLVYGWTYL), 116–136 (VLVLFATAGMMLLASAGSLLM), 169–189 (FVLGSLASGLLLYGMSLVYGA), 211–231 (LLTGTIFMIAGVAFKLGAAPF), 242–262 (APAPIALFISSAPKLAAFGMA), 277–297 (WHLLIGGLSAVSLVVGNLMAI), 305–325 (MLAYSTVSHIGFLLMGVAGGG), 333–353 (MFYAVSYTIMSTASFGAIIAL), 377–397 (AGLVLCIMASLAGIPPFLGFW), 410–430 (DMLWLALVGVICAVIGAYYYL), and 457–477 (VLGVNALALLALGLAWSPIMV).

Belongs to the complex I subunit 2 family. In terms of assembly, NDH-1 is composed of 14 different subunits. Subunits NuoA, H, J, K, L, M, N constitute the membrane sector of the complex.

It localises to the cell inner membrane. The catalysed reaction is a quinone + NADH + 5 H(+)(in) = a quinol + NAD(+) + 4 H(+)(out). NDH-1 shuttles electrons from NADH, via FMN and iron-sulfur (Fe-S) centers, to quinones in the respiratory chain. The immediate electron acceptor for the enzyme in this species is believed to be ubiquinone. Couples the redox reaction to proton translocation (for every two electrons transferred, four hydrogen ions are translocated across the cytoplasmic membrane), and thus conserves the redox energy in a proton gradient. The protein is NADH-quinone oxidoreductase subunit N of Xanthomonas euvesicatoria pv. vesicatoria (strain 85-10) (Xanthomonas campestris pv. vesicatoria).